The following is a 302-amino-acid chain: Endochitinase 4 (302 aa).

An N-terminal signal peptide occupies residues 1–18; it reads EFTALSLLFSLLLLTASA. In terms of domain architecture, Chitin-binding type-1 spans 19–60; that stretch reads EQCGKQAGGARCAAGLCCSNFGWCGNTNDYCGPGKCQSQCPS. 4 cysteine pairs are disulfide-bonded: Cys-21/Cys-36, Cys-30/Cys-42, Cys-35/Cys-49, and Cys-54/Cys-58. The interval 59–79 is disordered; that stretch reads PSGPSPKPPTPGPGPSGGDIG. The segment covering 61 to 72 has biased composition (pro residues); sequence GPSPKPPTPGPG. Glu-144 serves as the catalytic Proton donor. Cys-162 and Cys-182 are oxidised to a cystine.

This sequence belongs to the glycosyl hydrolase 19 family. Chitinase class I subfamily.

It localises to the vacuole. The catalysed reaction is Random endo-hydrolysis of N-acetyl-beta-D-glucosaminide (1-&gt;4)-beta-linkages in chitin and chitodextrins.. Its function is as follows. Defense against chitin-containing fungal pathogens. This is Endochitinase 4 (CHTB4) from Solanum tuberosum (Potato).